The primary structure comprises 1752 residues: Gag-Pol polyprotein (1752 aa).

Gly2 carries the N-myristoyl glycine; by host lipid modification. The stretch at 154–185 (AAQQQVLLLQREQQREQREKDIKKRDEKKKKL) forms a coiled coil. Over residues 168 to 178 (REQREKDIKKR) the composition is skewed to basic and acidic residues. The disordered stretch occupies residues 168 to 222 (REQREKDIKKRDEKKKKLLPDTTQKVEQTDIGEASSSDASAQKPISTDNNPDLKV). Residues 201-217 (ASSSDASAQKPISTDNN) show a composition bias toward polar residues. The CCHC-type zinc-finger motif lies at 501 to 518 (NTCFFCKQPGHWKADCPN). The region spanning 618–694 (IPMLVDTGAC…QTFHILGRDT (77 aa)) is the Peptidase A2 domain. Asp623 acts as the Protease; shared with dimeric partner in catalysis. Residues 793–977 (ENQGILIKCH…QEVVYLGQLL (185 aa)) form the Reverse transcriptase domain. Asp861, Asp928, Asp929, Asp1231, Glu1269, Asp1290, Asp1360, Asp1493, and Asp1550 together coordinate Mg(2+). One can recognise an RNase H type-1 domain in the interval 1222 to 1368 (PDPDMTLFSD…ADEAAKNAVF (147 aa)). An Integrase catalytic domain is found at 1482-1638 (LPSRPFAHLQ…SPHEIVMGRP (157 aa)).

As to quaternary structure, homohexamer. Further associates as homomultimer. The virus core is composed of a lattice formed from hexagonal rings, each containing six capsid monomers. The protease is a homodimer, whose active site consists of two apposed aspartic acid residues. The reverse transcriptase is a monomer. The cofactor is Mg(2+). Specific enzymatic cleavages by the viral protease yield mature proteins. The protease is released by autocatalytic cleavage. The polyprotein is cleaved during and after budding, this process is termed maturation.

It is found in the host cell membrane. The protein resides in the virion. The enzyme catalyses DNA(n) + a 2'-deoxyribonucleoside 5'-triphosphate = DNA(n+1) + diphosphate. It catalyses the reaction Endonucleolytic cleavage to 5'-phosphomonoester.. Functionally, targets Gag and gag-pol polyproteins to the plasma membrane via a multipartite membrane binding signal, that includes its myristoylated N-terminus. Also mediates nuclear localization of the pre-integration complex. Its function is as follows. Capsid protein p25 forms the spherical core of the virion that encapsulates the genomic RNA-nucleocapsid complex. Involved in the packaging and encapsidation of two copies of the genome. Binds with high affinity to conserved UCUG elements within the packaging signal, located near the 5'-end of the genome. This binding is dependent on genome dimerization. In terms of biological role, mediates proteolytic cleavages of Gag and Gag-Pol polyproteins during or shortly after the release of the virion from the plasma membrane. Cleavages take place as an ordered, step-wise cascade to yield mature proteins. This process is called maturation. Displays maximal activity during the budding process just prior to particle release from the cell. Functionally, is a multifunctional enzyme that converts the viral dimeric RNA genome into dsDNA in the cytoplasm, shortly after virus entry into the cell. This enzyme displays a DNA polymerase activity that can copy either DNA or RNA templates, and a ribonuclease H (RNase H) activity that cleaves the RNA strand of RNA-DNA heteroduplexes in a partially processive 3' to 5' endonucleasic mode. Conversion of viral genomic RNA into dsDNA requires many steps. A tRNA binds to the primer-binding site (PBS) situated at the 5' end of the viral RNA. RT uses the 3' end of the tRNA primer to perform a short round of RNA-dependent minus-strand DNA synthesis. The reading proceeds through the U5 region and ends after the repeated (R) region which is present at both ends of viral RNA. The portion of the RNA-DNA heteroduplex is digested by the RNase H, resulting in a ssDNA product attached to the tRNA primer. This ssDNA/tRNA hybridizes with the identical R region situated at the 3' end of viral RNA. This template exchange, known as minus-strand DNA strong stop transfer, can be either intra- or intermolecular. RT uses the 3' end of this newly synthesized short ssDNA to perform the RNA-dependent minus-strand DNA synthesis of the whole template. RNase H digests the RNA template except for a polypurine tract (PPT) situated at the 5' end of the genome. It is not clear if both polymerase and RNase H activities are simultaneous. RNase H probably can proceed both in a polymerase-dependent (RNA cut into small fragments by the same RT performing DNA synthesis) and a polymerase-independent mode (cleavage of remaining RNA fragments by free RTs). Secondly, RT performs DNA-directed plus-strand DNA synthesis using the PPT that has not been removed by RNase H as primers. PPT and tRNA primers are then removed by RNase H. The 3' and 5' ssDNA PBS regions hybridize to form a circular dsDNA intermediate. Strand displacement synthesis by RT to the PBS and PPT ends produces a blunt ended, linear dsDNA copy of the viral genome that includes long terminal repeats (LTRs) at both ends. Its function is as follows. Catalyzes viral DNA integration into the host chromosome, by performing a series of DNA cutting and joining reactions. This enzyme activity takes place after virion entry into a cell and reverse transcription of the RNA genome in dsDNA. The first step in the integration process is 3' processing. This step requires a complex comprising the viral genome, matrix protein and integrase. This complex is called the pre-integration complex (PIC). The integrase protein removes 2 nucleotides from each 3' end of the viral DNA, leaving recessed CA OH's at the 3' ends. In the second step that requires cell division, the PIC enters cell nucleus. In the third step, termed strand transfer, the integrase protein joins the previously processed 3' ends to the 5' ends of strands of target cellular DNA at the site of integration. The last step is viral DNA integration into host chromosome. Plays a role in budding and is processed by the viral protease during virion maturation outside the cell. This is Gag-Pol polyprotein (gag-pol) from Walleye dermal sarcoma virus (WDSV).